The primary structure comprises 252 residues: Hydroxyacylglutathione hydrolase (252 aa).

Residues histidine 54, histidine 56, aspartate 58, histidine 59, histidine 113, aspartate 132, and histidine 170 each contribute to the Zn(2+) site.

It belongs to the metallo-beta-lactamase superfamily. Glyoxalase II family. As to quaternary structure, monomer. Zn(2+) is required as a cofactor.

The enzyme catalyses an S-(2-hydroxyacyl)glutathione + H2O = a 2-hydroxy carboxylate + glutathione + H(+). It functions in the pathway secondary metabolite metabolism; methylglyoxal degradation; (R)-lactate from methylglyoxal: step 2/2. In terms of biological role, thiolesterase that catalyzes the hydrolysis of S-D-lactoyl-glutathione to form glutathione and D-lactic acid. This Thermosynechococcus vestitus (strain NIES-2133 / IAM M-273 / BP-1) protein is Hydroxyacylglutathione hydrolase.